A 729-amino-acid polypeptide reads, in one-letter code: Elongation factor 2 (729 aa).

The tr-type G domain occupies 19 to 262 (EQIRNIAIAA…MVCEHFPNPI (244 aa)). Residues 28 to 35 (AHVDHGKT), 94 to 98 (DTPGH), and 148 to 151 (NKVD) each bind GTP. His-597 bears the Diphthamide mark.

It belongs to the TRAFAC class translation factor GTPase superfamily. Classic translation factor GTPase family. EF-G/EF-2 subfamily.

The protein resides in the cytoplasm. Its function is as follows. Catalyzes the GTP-dependent ribosomal translocation step during translation elongation. During this step, the ribosome changes from the pre-translocational (PRE) to the post-translocational (POST) state as the newly formed A-site-bound peptidyl-tRNA and P-site-bound deacylated tRNA move to the P and E sites, respectively. Catalyzes the coordinated movement of the two tRNA molecules, the mRNA and conformational changes in the ribosome. In Halomicrobium mukohataei (strain ATCC 700874 / DSM 12286 / JCM 9738 / NCIMB 13541) (Haloarcula mukohataei), this protein is Elongation factor 2.